Consider the following 1360-residue polypeptide: Activating molecule in BECN1-regulated autophagy protein 1B (1360 aa).

3 WD repeats span residues Asp50–Ser89, Gly92–Phe132, and Glu134–Lys174. The segment covering Arg249–Gln258 has biased composition (polar residues). Disordered regions lie at residues Arg249–Pro277, Pro315–His364, Gly412–Asn490, Glu514–Ser573, Trp587–Gly616, Pro664–Glu688, and Thr754–Asn796. Residues Gln319–Ser333 are compositionally biased toward low complexity. Polar residues predominate over residues Ala350–Asn361. Positions Ser428–Leu437 are enriched in low complexity. Composition is skewed to polar residues over residues Gly443–Thr454 and Asp473–Asn490. A compositionally biased stretch (low complexity) spans Ser590–Leu607. Over residues Thr754–Ser768 the composition is skewed to polar residues. Residues Ser775–Glu784 are compositionally biased toward acidic residues. Short sequence motifs (TQT motif) lie at residues Thr1109–Thr1111 and Thr1121–Thr1123. Disordered stretches follow at residues Glu1120–His1142 and Ser1241–Arg1360. Composition is skewed to polar residues over residues Ser1129–His1142 and Ser1241–Asn1252. Residues Ala1278 to Pro1288 are compositionally biased toward low complexity. A compositionally biased stretch (basic and acidic residues) spans Phe1311–Arg1321. A compositionally biased stretch (low complexity) spans Asn1329 to Glu1347. Basic and acidic residues predominate over residues Ser1348 to Arg1360.

Belongs to the WD repeat AMBRA1 family. In terms of assembly, component of the DCX(AMBRA1) E3 ubiquitin ligase complex.

It localises to the endoplasmic reticulum. The protein resides in the cytoplasm. Its subcellular location is the cytoskeleton. The protein localises to the cytoplasmic vesicle. It is found in the autophagosome. It localises to the mitochondrion. The protein resides in the cytosol. Its subcellular location is the nucleus. The protein localises to the cell junction. It is found in the focal adhesion. Its pathway is protein modification; protein ubiquitination. Its function is as follows. Substrate-recognition component of a DCX (DDB1-CUL4-X-box) E3 ubiquitin-protein ligase complex involved in cell cycle control and autophagy. The DCX(AMBRA1) complex specifically mediates the polyubiquitination of target proteins. Acts as an upstream master regulator of the transition from G1 to S cell phase: ambra1b specifically recognizes and binds phosphorylated cyclin-D (ccnd1, ccnd2 and ccnd3), leading to cyclin-D ubiquitination by the DCX(AMBRA1) complex and subsequent degradation. Acts as a regulator of Cul5-RING (CRL5) E3 ubiquitin-protein ligase complexes by mediating ubiquitination and degradation of Elongin-C (eloc) component of CRL5 complexes. Acts as a key regulator of autophagy by modulating the BECN1-PIK3C3 complex: controls protein turnover during neuronal development, and regulates normal cell survival and proliferation. In normal conditions, ambra1b is tethered to the cytoskeleton via interaction with dyneins light chains. Upon autophagy induction, ambra1b is released from the cytoskeletal docking site to induce autophagosome nucleation by mediating ubiquitination of proteins involved in autophagy. Also acts as an activator of mitophagy. Required for skeletal muscle development. The chain is Activating molecule in BECN1-regulated autophagy protein 1B from Danio rerio (Zebrafish).